We begin with the raw amino-acid sequence, 244 residues long: MPRPSPCADSGGGMMTTLTARPEAITFDPQQSALIVVDMQNAYATPGGYLDLAGFDVSTTRPVIANIQTAVTAARAAGMLIIWFQNGWDEQYVEAGGPGSPNFHKSNALKTMRKQPQLQGKLLAKGSWDYQLVDELVPQPGDIVLPKPRYSGFFNTPLDSILRSRGIRHLVFTGIATNVCVESTLRDGFFLEYFGVVLEDATHQAGPEFVQKAALFNIETFFGWVSDVETFCDALSPTSFARIA.

Catalysis depends on aspartate 38, which acts as the Proton acceptor. Lysine 147 is an active-site residue. Catalysis depends on cysteine 180, which acts as the Nucleophile.

Belongs to the isochorismatase family. RutB subfamily.

The enzyme catalyses (Z)-3-ureidoacrylate + H2O + H(+) = (Z)-3-aminoacrylate + NH4(+) + CO2. The catalysed reaction is (Z)-3-ureidoacrylate + H2O = (Z)-3-aminoacrylate + carbamate + H(+). It carries out the reaction (Z)-2-methylureidoacrylate + H2O + H(+) = (Z)-2-methylaminoacrylate + NH4(+) + CO2. Functionally, hydrolyzes ureidoacrylate to form aminoacrylate and carbamate. The carbamate hydrolyzes spontaneously, thereby releasing one of the nitrogen atoms of the pyrimidine ring as ammonia and one of its carbon atoms as CO2. This is Ureidoacrylate amidohydrolase RutB from Escherichia coli O55:H7 (strain CB9615 / EPEC).